The sequence spans 44 residues: Phosphatase RapE inhibitor (44 aa).

2 consecutive propeptides follow at residues 1-30 and 36-44; these read MKSKLFISLSAVLIGLAFFGSMYNGEMKEA and LAPTHEFLV.

Belongs to the Phr family. Contains a predicted signal peptide cleavage site in the N-terminal region, however the propeptide is probably only subject to processing events at the ends of the mature peptide.

It localises to the secreted. The protein localises to the cytoplasm. Signaling molecule involved in the regulation of sporulation. Secreted during production, but the mature peptide acts intracellularly, indicating that it needs to be imported into the cell to function. Inhibitor of the RapE phosphatase activity. Does not inhibit the phosphatase activity of RapA and RapB. Probably plays a dispensable role in the overall context of sporulation initiation. The sequence is that of Phosphatase RapE inhibitor (phrE) from Bacillus subtilis (strain 168).